Consider the following 186-residue polypeptide: ATP synthase subunit b (186 aa).

Residues I28–P48 form a helical membrane-spanning segment.

The protein belongs to the ATPase B chain family. F-type ATPases have 2 components, F(1) - the catalytic core - and F(0) - the membrane proton channel. F(1) has five subunits: alpha(3), beta(3), gamma(1), delta(1), epsilon(1). F(0) has three main subunits: a(1), b(2) and c(10-14). The alpha and beta chains form an alternating ring which encloses part of the gamma chain. F(1) is attached to F(0) by a central stalk formed by the gamma and epsilon chains, while a peripheral stalk is formed by the delta and b chains.

It is found in the cell membrane. In terms of biological role, f(1)F(0) ATP synthase produces ATP from ADP in the presence of a proton or sodium gradient. F-type ATPases consist of two structural domains, F(1) containing the extramembraneous catalytic core and F(0) containing the membrane proton channel, linked together by a central stalk and a peripheral stalk. During catalysis, ATP synthesis in the catalytic domain of F(1) is coupled via a rotary mechanism of the central stalk subunits to proton translocation. Its function is as follows. Component of the F(0) channel, it forms part of the peripheral stalk, linking F(1) to F(0). This Corynebacterium jeikeium (strain K411) protein is ATP synthase subunit b.